The following is a 411-amino-acid chain: Peptidase T (411 aa).

Histidine 79 lines the Zn(2+) pocket. Aspartate 81 is an active-site residue. Residue aspartate 142 coordinates Zn(2+). Residue glutamate 176 is the Proton acceptor of the active site. Zn(2+) is bound by residues glutamate 177, aspartate 199, and histidine 381.

This sequence belongs to the peptidase M20B family. It depends on Zn(2+) as a cofactor.

The protein localises to the cytoplasm. It carries out the reaction Release of the N-terminal residue from a tripeptide.. Its function is as follows. Cleaves the N-terminal amino acid of tripeptides. In Exiguobacterium sibiricum (strain DSM 17290 / CCUG 55495 / CIP 109462 / JCM 13490 / 255-15), this protein is Peptidase T.